The chain runs to 558 residues: Glypican-1 (558 aa).

The first 23 residues, 1-23, serve as a signal peptide directing secretion; the sequence is MELRARGWWLLCAAAALVACARG. 7 cysteine pairs are disulfide-bonded: C32–C68, C62–C256, C69–C259, C191–C343, C246–C279, C268–C415, and C272–C401. 2 N-linked (GlcNAc...) asparagine glycosylation sites follow: N79 and N116. A disordered region spans residues 341 to 374; that stretch reads QGCGNPKVNPQGPGPEEKRRRGKLAPRERPPSGT. A compositionally biased stretch (basic and acidic residues) spans 355–370; that stretch reads PEEKRRRGKLAPRERP. O-linked (Xyl...) (heparan sulfate) serine glycosylation is found at S486, S488, and S490. The tract at residues 505–534 is disordered; sequence RKSSSSRTPLTHALPGLSEQEGQKTSAASC. S530 carries GPI-anchor amidated serine lipidation. Residues 531-558 constitute a propeptide, removed in mature form; that stretch reads AASCPQPPTFLLPLLLFLALTVARPRWR.

The protein belongs to the glypican family. S-nitrosylated in a Cu(2+)-dependent manner. Nitric acid (NO) is released from the nitrosylated cysteines by ascorbate or by some other reducing agent, in a Cu(2+) or Zn(2+) dependent manner. This free nitric oxide is then capable of cleaving the heparan sulfate side chains. Post-translationally, N- and O-glycosylated. N-glycosylation is mainly of the complex type containing sialic acid. O-glycosylated with heparan sulfate. The heparan sulfate chains can be cleaved either by the action of heparanase or, degraded by a deaminative process that uses nitric oxide (NO) released from the S-nitrosylated cysteines. This process is triggered by ascorbate, or by some other reducing agent, in a Cu(2+)- or Zn(2+) dependent manner. Cu(2+) ions are provided by ceruloproteins such as APP, PRNP or CP which associate with GCP1 in intracellular compartments or lipid rafts. In terms of processing, this cell-associated glypican is further processed to give rise to a medium-released species.

The protein resides in the cell membrane. It localises to the endosome. Its subcellular location is the secreted. The protein localises to the extracellular space. Its function is as follows. Cell surface proteoglycan that bears heparan sulfate. Binds, via the heparan sulfate side chains, alpha-4 (V) collagen and participates in Schwann cell myelination. May act as a catalyst in increasing the rate of conversion of prion protein PRPN(C) to PRNP(Sc) via associating (via the heparan sulfate side chains) with both forms of PRPN, targeting them to lipid rafts and facilitating their interaction. Required for proper skeletal muscle differentiation by sequestering FGF2 in lipid rafts preventing its binding to receptors (FGFRs) and inhibiting the FGF-mediated signaling. The polypeptide is Glypican-1 (GPC1) (Homo sapiens (Human)).